We begin with the raw amino-acid sequence, 189 residues long: Parkinson disease protein 7 (189 aa).

An N-acetylalanine modification is found at alanine 2. Residues cysteine 46 and cysteine 53 are each lipidated (S-palmitoyl cysteine). Tyrosine 67 is modified (phosphotyrosine). The Nucleophile role is filled by cysteine 106. Cysteine 106 carries the post-translational modification Cysteine sulfinic acid (-SO2H); alternate. Cysteine 106 carries the S-palmitoyl cysteine; alternate lipid modification. Histidine 126 is a catalytic residue. Lysine 130 participates in a covalent cross-link: Glycyl lysine isopeptide (Lys-Gly) (interchain with G-Cter in SUMO). Lysine 148 is subject to N6-acetyllysine. Lysine 182 carries the N6-succinyllysine modification.

It belongs to the peptidase C56 family. In terms of assembly, homodimer. Binds EFCAB6/DJBP and PIAS2. Part of a ternary complex containing PARK7, EFCAB6/DJBP and AR. Interacts (via N-terminus) with OTUD7B. Interacts with BBS1, HIPK1, CLCF1 and MTERF. Forms a complex with PINK1 and PRKN. Interacts (via C-terminus) with NCF1; the interaction is enhanced by LPS and modulates NCF1 phosphorylation and membrane translocation. Interacts with NENF. Requires Deglycase activity does not require glutathione as a cofactor, however, glycated glutathione constitutes a PARK7 substrate. as cofactor. In terms of processing, sumoylated on Lys-130 by PIAS2 or PIAS4; which is enhanced after ultraviolet irradiation and essential for cell-growth promoting activity and transforming activity. Post-translationally, cys-106 is easily oxidized to sulfinic acid. Undergoes cleavage of a C-terminal peptide and subsequent activation of protease activity in response to oxidative stress. In terms of tissue distribution, highly expressed in pancreas, kidney, skeletal muscle, liver, testis and heart. Detected at slightly lower levels in placenta and brain (at protein level). Detected in astrocytes, Sertoli cells, spermatogonia, spermatids and spermatozoa. Expressed by pancreatic islets at higher levels than surrounding exocrine tissues.

It localises to the cell membrane. The protein localises to the cytoplasm. It is found in the nucleus. Its subcellular location is the membrane raft. The protein resides in the mitochondrion. It localises to the endoplasmic reticulum. The enzyme catalyses N(omega)-(1-hydroxy-2-oxopropyl)-L-arginyl-[protein] + H2O = lactate + L-arginyl-[protein] + H(+). It carries out the reaction N(6)-(1-hydroxy-2-oxopropyl)-L-lysyl-[protein] + H2O = lactate + L-lysyl-[protein] + H(+). The catalysed reaction is S-(1-hydroxy-2-oxopropyl)-L-cysteinyl-[protein] + H2O = lactate + L-cysteinyl-[protein] + H(+). It catalyses the reaction N(omega)-(1-hydroxy-2-oxoethyl)-L-arginyl-[protein] + H2O = L-arginyl-[protein] + glycolate + H(+). The enzyme catalyses N(6)-(1-hydroxy-2-oxoethyl)-L-lysyl-[protein] + H2O = glycolate + L-lysyl-[protein] + H(+). It carries out the reaction S-(1-hydroxy-2-oxoethyl)-L-cysteinyl-[protein] + H2O = glycolate + L-cysteinyl-[protein] + H(+). The catalysed reaction is N(2)-(1-hydroxy-2-oxopropyl)-dGTP + H2O = lactate + dGTP + H(+). It catalyses the reaction N(2)-(1-hydroxy-2-oxopropyl)-GTP + H2O = lactate + GTP + H(+). The enzyme catalyses N(2)-(1-hydroxy-2-oxopropyl)-GDP + H2O = lactate + GDP + H(+). It carries out the reaction N(2)-(1-hydroxy-2-oxopropyl)-GMP + H2O = lactate + GMP + H(+). The catalysed reaction is N(2)-(1-hydroxy-2-oxoethyl)-dGTP + H2O = dGTP + glycolate + H(+). It catalyses the reaction N(2)-(1-hydroxy-2-oxoethyl)-GTP + H2O = glycolate + GTP + H(+). The enzyme catalyses N(2)-(1-hydroxy-2-oxoethyl)-GDP + H2O = glycolate + GDP + H(+). It carries out the reaction N(2)-(1-hydroxy-2-oxoethyl)-GMP + H2O = glycolate + GMP + H(+). The catalysed reaction is an N(2)-(1-hydroxy-2-oxopropyl)-guanosine in RNA + H2O = a guanosine in RNA + lactate + H(+). It catalyses the reaction an N(2)-(1-hydroxy-2-oxopropyl)-2'-deoxyguanosine in DNA + H2O = a 2'-deoxyguanosine in DNA + lactate + H(+). The enzyme catalyses an N(2)-(1-hydroxy-2-oxoethyl)-guanosine in RNA + H2O = a guanosine in RNA + glycolate + H(+). It carries out the reaction an N(2)-(1-hydroxy-2-oxoethyl)-2'-deoxyguanosine in DNA + H2O = a 2'-deoxyguanosine in DNA + glycolate + H(+). Functionally, multifunctional protein with controversial molecular function which plays an important role in cell protection against oxidative stress and cell death acting as oxidative stress sensor and redox-sensitive chaperone and protease. It is involved in neuroprotective mechanisms like the stabilization of NFE2L2 and PINK1 proteins, male fertility as a positive regulator of androgen signaling pathway as well as cell growth and transformation through, for instance, the modulation of NF-kappa-B signaling pathway. Has been described as a protein and nucleotide deglycase that catalyzes the deglycation of the Maillard adducts formed between amino groups of proteins or nucleotides and reactive carbonyl groups of glyoxals. But this function is rebuted by other works. As a protein deglycase, repairs methylglyoxal- and glyoxal-glycated proteins, and releases repaired proteins and lactate or glycolate, respectively. Deglycates cysteine, arginine and lysine residues in proteins, and thus reactivates these proteins by reversing glycation by glyoxals. Acts on early glycation intermediates (hemithioacetals and aminocarbinols), preventing the formation of advanced glycation endproducts (AGE) that cause irreversible damage. Also functions as a nucleotide deglycase able to repair glycated guanine in the free nucleotide pool (GTP, GDP, GMP, dGTP) and in DNA and RNA. Is thus involved in a major nucleotide repair system named guanine glycation repair (GG repair), dedicated to reversing methylglyoxal and glyoxal damage via nucleotide sanitization and direct nucleic acid repair. Protects histones from adduction by methylglyoxal, controls the levels of methylglyoxal-derived argininine modifications on chromatin. Able to remove the glycations and restore histone 3, histone glycation disrupts both local and global chromatin architecture by altering histone-DNA interactions as well as histone acetylation and ubiquitination levels. Displays a very low glyoxalase activity that may reflect its deglycase activity. Eliminates hydrogen peroxide and protects cells against hydrogen peroxide-induced cell death. Required for correct mitochondrial morphology and function as well as for autophagy of dysfunctional mitochondria. Plays a role in regulating expression or stability of the mitochondrial uncoupling proteins SLC25A14 and SLC25A27 in dopaminergic neurons of the substantia nigra pars compacta and attenuates the oxidative stress induced by calcium entry into the neurons via L-type channels during pacemaking. Regulates astrocyte inflammatory responses, may modulate lipid rafts-dependent endocytosis in astrocytes and neuronal cells. In pancreatic islets, involved in the maintenance of mitochondrial reactive oxygen species (ROS) levels and glucose homeostasis in an age- and diet dependent manner. Protects pancreatic beta cells from cell death induced by inflammatory and cytotoxic setting. Binds to a number of mRNAs containing multiple copies of GG or CC motifs and partially inhibits their translation but dissociates following oxidative stress. Metal-binding protein able to bind copper as well as toxic mercury ions, enhances the cell protection mechanism against induced metal toxicity. In macrophages, interacts with the NADPH oxidase subunit NCF1 to direct NADPH oxidase-dependent ROS production, and protects against sepsis. The protein is Parkinson disease protein 7 of Homo sapiens (Human).